The sequence spans 294 residues: Nucleotide-binding protein Smal_0950 (294 aa).

16–23 (GLSGSGKS) lines the ATP pocket. Residue 69–72 (DVRG) participates in GTP binding.

The protein belongs to the RapZ-like family.

Its function is as follows. Displays ATPase and GTPase activities. The sequence is that of Nucleotide-binding protein Smal_0950 from Stenotrophomonas maltophilia (strain R551-3).